A 342-amino-acid polypeptide reads, in one-letter code: MKALAKLERAPGLTLTRVKKPEVGHNDVMIRITRTAICGTDIHIWKWDDWAQKTIPVPMHVGHEYVGEIVEMGQEVRGFSIGDRVSGEGHITCGFCRNCRAGRRHLCRNTVGVGVNREGAFAEYLVIPAFNAFKIPPEISDDLAAIFDPFGNATHTALSFNLVGEDVLITGAGPIGIMAVAIAKHVGARNVVITDVNDYRLELARKMGATRAVNVSRETLRDVMRDLHMTEGFDVGLEMSGVPSAFTSMLEAMNHGGKIALLGIPPAQTAIDWTQVIFKGLEIKGIYGREMFETWYKMVAMLQSGLDLSPILTHRFAVDDYEKAFATMLSGESGKVILDWTV.

Cys38 serves as a coordination point for Zn(2+). Active-site charge relay system residues include Thr40 and His43. Positions 63, 64, 93, 96, 99, and 107 each coordinate Zn(2+). NAD(+) is bound by residues Ile175, Asp195, Arg200, 262 to 264, and 286 to 287; these read LGI and IY.

This sequence belongs to the zinc-containing alcohol dehydrogenase family. Homotetramer. Zn(2+) is required as a cofactor.

It is found in the cytoplasm. The enzyme catalyses L-threonine + NAD(+) = (2S)-2-amino-3-oxobutanoate + NADH + H(+). It participates in amino-acid degradation; L-threonine degradation via oxydo-reductase pathway; glycine from L-threonine: step 1/2. In terms of biological role, catalyzes the NAD(+)-dependent oxidation of L-threonine to 2-amino-3-ketobutyrate. In Paraburkholderia phymatum (strain DSM 17167 / CIP 108236 / LMG 21445 / STM815) (Burkholderia phymatum), this protein is L-threonine 3-dehydrogenase.